The sequence spans 239 residues: Dihydromethanopterin reductase (acceptor) (239 aa).

4Fe-4S ferredoxin-type domains follow at residues 144-175 (MPYN…EKNG) and 176-205 (VTDQ…GGPV). [4Fe-4S] cluster is bound by residues Cys-153, Cys-156, Cys-159, Cys-165, Cys-185, Cys-188, Cys-191, and Cys-195.

Homodimer. It depends on [4Fe-4S] cluster as a cofactor.

The enzyme catalyses 5,6,7,8-tetrahydromethanopterin + A = 7,8-dihydromethanopterin + AH2. Its pathway is cofactor biosynthesis; 5,6,7,8-tetrahydromethanopterin biosynthesis. Its function is as follows. Involved in the biosynthesis of tetrahydromethanopterin, a coenzyme used in methanogenesis. Catalyzes the reduction of dihydromethanopterin (H(2)MPT) to tetrahydromethanopterin (H(4)MPT). Ferredoxin may serve as an electron donor. The protein is Dihydromethanopterin reductase (acceptor) of Methanosarcina mazei (strain ATCC BAA-159 / DSM 3647 / Goe1 / Go1 / JCM 11833 / OCM 88) (Methanosarcina frisia).